The following is a 477-amino-acid chain: tRNA-2-methylthio-N(6)-dimethylallyladenosine synthase (477 aa).

Positions 3–120 constitute an MTTase N-terminal domain; that stretch reads KKLHIKTWGC…LPTMIKQVQE (118 aa). Cysteine 12, cysteine 49, cysteine 83, cysteine 157, cysteine 161, and cysteine 164 together coordinate [4Fe-4S] cluster. The 233-residue stretch at 143 to 375 folds into the Radical SAM core domain; it reads RAEGATAFVS…QHVINNQSMQ (233 aa). Positions 378–441 constitute a TRAM domain; sequence RAMLGSTQRI…PNSLRGKFLR (64 aa).

Belongs to the methylthiotransferase family. MiaB subfamily. Monomer. The cofactor is [4Fe-4S] cluster.

It localises to the cytoplasm. It carries out the reaction N(6)-dimethylallyladenosine(37) in tRNA + (sulfur carrier)-SH + AH2 + 2 S-adenosyl-L-methionine = 2-methylsulfanyl-N(6)-dimethylallyladenosine(37) in tRNA + (sulfur carrier)-H + 5'-deoxyadenosine + L-methionine + A + S-adenosyl-L-homocysteine + 2 H(+). Catalyzes the methylthiolation of N6-(dimethylallyl)adenosine (i(6)A), leading to the formation of 2-methylthio-N6-(dimethylallyl)adenosine (ms(2)i(6)A) at position 37 in tRNAs that read codons beginning with uridine. The sequence is that of tRNA-2-methylthio-N(6)-dimethylallyladenosine synthase from Aeromonas hydrophila subsp. hydrophila (strain ATCC 7966 / DSM 30187 / BCRC 13018 / CCUG 14551 / JCM 1027 / KCTC 2358 / NCIMB 9240 / NCTC 8049).